Consider the following 107-residue polypeptide: LQFCKLDPPQRQTAQTKALETLLLVSQDPNWLIRYAAVVGLEALAKIPQLQQPIQTRFAQILATDTEQAICSSRATGSKTRNRRQTTNRKLKPAFVLLLILFVPLSR.

Belongs to the CpcE/RpcE/PecE family. CpcE and CpcF associate to form a lyase.

In terms of biological role, required for the chromophorylation of the CpcA gene product. The chain is Phycocyanobilin lyase subunit beta (cpcF) from Mastigocladus laminosus (Fischerella sp.).